We begin with the raw amino-acid sequence, 67 residues long: uncharacterized protein (67 aa).

This is an uncharacterized protein from Swinepox virus (strain Kasza) (SWPV).